We begin with the raw amino-acid sequence, 1386 residues long: Roundabout homolog 3 (1386 aa).

The first 20 residues, 1-20 (MLRYLLKTLLQMNLFADSLA), serve as a signal peptide directing secretion. At 21-891 (GDISNSSELL…VRLARVLREP (871 aa)) the chain is on the extracellular side. N-linked (GlcNAc...) asparagine glycosylation is found at N25, N34, N41, and N53. 5 consecutive Ig-like C2-type domains span residues 64 to 160 (PRIV…ASLE), 166 to 253 (DDFR…AEVM), 258 to 342 (PSFL…GSLS), 347 to 440 (PQLV…ALLE), and 450 to 531 (PPVI…GEAT). C85 and C143 are disulfide-bonded. N156 carries N-linked (GlcNAc...) asparagine glycosylation. Cystine bridges form between C187–C236, C279–C326, and C368–C424. N-linked (GlcNAc...) asparagine glycans are attached at residues N410, N459, and N503. A disulfide bond links C472 and C521. 2 disordered regions span residues 541–563 (DWGVSPDPPTEPSSPPGAPSQPV) and 639–662 (EPSPVSEPVRTQDSSPSRPVEDPW). A compositionally biased stretch (pro residues) spans 546–559 (PDPPTEPSSPPGAP). Fibronectin type-III domains are found at residues 558-652 (APSQ…TQDS), 671-766 (VAVR…IPEE), and 771-869 (PPQG…SPPD). N-linked (GlcNAc...) asparagine glycans are attached at residues N784, N813, and N820. Residues 892–912 (AFLAGSGAACGALLLGLCAAL) traverse the membrane as a helical segment. At 913–1386 (YWRRKQRKEL…PGQKRREEPR (474 aa)) the chain is on the cytoplasmic side. Disordered regions lie at residues 965–989 (SWPHPSRSPSAQEPRGSCCPSNPDP), 1028–1310 (ELQT…AVPL), and 1327–1386 (SRPS…EEPR). The segment covering 1067 to 1083 (VKLLGKPVQMPSLNWPE) has biased composition (low complexity). A compositionally biased stretch (acidic residues) spans 1099-1112 (GPEEELEGSSEPEE). Pro residues predominate over residues 1158 to 1169 (PSPPDPPQPPTD). 2 stretches are compositionally biased toward low complexity: residues 1178–1191 (RRVPLGPSSPLSVS) and 1202–1229 (PAGLGAGPAASPHLSPSPAPSTASSAPG). S1263 carries the post-translational modification Phosphoserine. The segment covering 1294–1304 (LERERSGERKA) has biased composition (basic and acidic residues). The span at 1333–1344 (SRGQGTSTCSTA) shows a compositional bias: polar residues. Over residues 1345 to 1361 (GSNSSRGSSSSRGSRGP) the composition is skewed to low complexity.

The protein belongs to the immunoglobulin superfamily. ROBO family. In terms of assembly, monomer. Interacts (via Fibronectin type-III 1 domain) with NELL2 (via the EGF domains) with a 3:3 stoichiometry; this interaction promotes oligomerization of ROBO3 resulting in the repulsion of commissural axons in the midline.

It is found in the membrane. In terms of biological role, receptor involved in axon guidance during development. Acts as a multifunctional regulator of pathfinding that simultaneously mediates NELL2 repulsion, inhibits SLIT repulsion, and facilitates Netrin-1/NTN1 attraction. In spinal cord development plays a role in guiding commissural axons probably by preventing premature sensitivity to Slit proteins thus inhibiting Slit signaling through ROBO1/ROBO2. Binding OF NELL2 to the receptor ROBO3 promotes oligomerization of ROBO3, resulting in the repulsion of commissural axons in the midline. ROBO3 also indirectly boosts axon attraction to NTN1 without interacting with NTN1 itself. In Homo sapiens (Human), this protein is Roundabout homolog 3.